We begin with the raw amino-acid sequence, 265 residues long: MAATVAEALAVTDELALPLRAVGDLAAAAGVSREEVVVITQCASLGGKLPFDDASVGSVLAVIKKVENLGDLFITEISRVLKAGGMVLIQSSPSDQDPNNSIQRKLLLGGFVDVQASAASSQDSEHSVTIKAKKVSWSLGSSFPLKKATKGLPKIQIDDDSELIDEDSLLTEDDLKKPELPVVGDCEVGATRKACKNCTCGRAEAEEKVEKLNLTSEQINNPQSACGNCGLGDAFRCGTCPYRGLPAFKPGEKIALPGNFLAADM.

An N-terminal SAM-like domain region spans residues 1–143; that stretch reads MAATVAEALA…KVSWSLGSSF (143 aa). Residues 144–175 form a linker region; that stretch reads PLKKATKGLPKIQIDDDSELIDEDSLLTEDDL. Residues cysteine 186, cysteine 195, cysteine 198, and cysteine 200 each contribute to the [2Fe-2S] cluster site. Positions 186 to 200 are fe-S binding site A; sequence CEVGATRKACKNCTC. [4Fe-4S] cluster is bound by residues cysteine 226, cysteine 229, cysteine 237, and cysteine 240. 2 short sequence motifs (cx2C motif) span residues 226–229 and 237–240; these read CGNC and CGTC. The tract at residues 226-240 is fe-S binding site B; that stretch reads CGNCGLGDAFRCGTC.

This sequence belongs to the anamorsin family. In terms of assembly, monomer. The cofactor is [2Fe-2S] cluster. It depends on [4Fe-4S] cluster as a cofactor.

It is found in the cytoplasm. The protein localises to the mitochondrion intermembrane space. In terms of biological role, component of the cytosolic iron-sulfur (Fe-S) protein assembly (CIA) machinery. Required for the maturation of extramitochondrial Fe-S proteins. Part of an electron transfer chain functioning in an early step of cytosolic Fe-S biogenesis, facilitating the de novo assembly of a [4Fe-4S] cluster on the cytosolic Fe-S scaffold complex. Electrons are transferred from NADPH via a FAD- and FMN-containing diflavin oxidoreductase. Together with the diflavin oxidoreductase, also required for the assembly of the diferric tyrosyl radical cofactor of ribonucleotide reductase (RNR), probably by providing electrons for reduction during radical cofactor maturation in the catalytic small subunit. The sequence is that of Anamorsin homolog 1 from Oryza sativa subsp. japonica (Rice).